We begin with the raw amino-acid sequence, 248 residues long: 1-(5-phosphoribosyl)-5-[(5-phosphoribosylamino)methylideneamino] imidazole-4-carboxamide isomerase (248 aa).

The active-site Proton acceptor is the Asp11. The Proton donor role is filled by Asp132.

The protein belongs to the HisA/HisF family.

The protein localises to the cytoplasm. The enzyme catalyses 1-(5-phospho-beta-D-ribosyl)-5-[(5-phospho-beta-D-ribosylamino)methylideneamino]imidazole-4-carboxamide = 5-[(5-phospho-1-deoxy-D-ribulos-1-ylimino)methylamino]-1-(5-phospho-beta-D-ribosyl)imidazole-4-carboxamide. The protein operates within amino-acid biosynthesis; L-histidine biosynthesis; L-histidine from 5-phospho-alpha-D-ribose 1-diphosphate: step 4/9. The chain is 1-(5-phosphoribosyl)-5-[(5-phosphoribosylamino)methylideneamino] imidazole-4-carboxamide isomerase from Afipia carboxidovorans (strain ATCC 49405 / DSM 1227 / KCTC 32145 / OM5) (Oligotropha carboxidovorans).